The following is a 405-amino-acid chain: MKVLVLNCGSSSVKYQVFDMKNESVLAKGLAERIGLEGSRIVYQRGSEAKKVFEIPLPTHKKAIEEIFKLLVDKNNGVLQSLNEIDAVGHRVVHGGDKFVESVLVNDEVYSIFKGILDLAPLHNPYNLQGVDACSELMPGVPQVLVFDTSFHQTMPEEAYIYALPYEWYEKYKIRRYGFHGTSHYYVSRRVAELIGRPVEELKIISCHLGNGASITAIKNGKSIDTSMGYTPLEGLVMGTRCGDIDPAIPILLMEKENLTPKQMDEILNKKSGILGISGVSSDFRDVGEAAEKGNKRAELALKVFAYRVKKYIGAYYAILGGLDVLVFTAGVGERGPLERSLICSGLEHLGIKLDPEKNKVKGEELRISAPDSKVEVWVIPTNEELMIARETVRVVGEKIIKKVI.

N7 is a binding site for Mg(2+). ATP is bound at residue K14. R91 is a binding site for substrate. The active-site Proton donor/acceptor is D148. ATP-binding positions include 208–212 (HLGNG) and 283–285 (DFR). Residue E384 coordinates Mg(2+).

The protein belongs to the acetokinase family. As to quaternary structure, homodimer. Mg(2+) serves as cofactor. It depends on Mn(2+) as a cofactor.

The protein localises to the cytoplasm. The enzyme catalyses acetate + ATP = acetyl phosphate + ADP. It participates in metabolic intermediate biosynthesis; acetyl-CoA biosynthesis; acetyl-CoA from acetate: step 1/2. In terms of biological role, catalyzes the formation of acetyl phosphate from acetate and ATP. Can also catalyze the reverse reaction. This is Acetate kinase from Dictyoglomus turgidum (strain DSM 6724 / Z-1310).